A 221-amino-acid polypeptide reads, in one-letter code: Immediate early response gene 2 protein (221 aa).

Met1 bears the N-acetylmethionine mark. The segment at 54-156 is disordered; that stretch reads THQPEFPPSR…EGEATSEVSN (103 aa). A compositionally biased stretch (basic and acidic residues) spans 64 to 77; sequence RALDPRLHPPREPE. A compositionally biased stretch (low complexity) spans 125-136; sequence SDLSDGSDAGLV.

This sequence belongs to the IER family.

It localises to the cytoplasm. It is found in the nucleus. Its function is as follows. DNA-binding protein that seems to act as a transcription factor. Involved in the regulation of neuronal differentiation, acts upon JNK-signaling pathway activation and plays a role in neurite outgrowth in hippocampal cells. May mediate with FIBP FGF-signaling in the establishment of laterality in the embryo. Promotes cell motility, seems to stimulate tumor metastasis. The chain is Immediate early response gene 2 protein (Ier2) from Rattus norvegicus (Rat).